The following is a 434-amino-acid chain: ATP-dependent RNA helicase sub2 (434 aa).

The Q motif motif lies at 59–87 (TGFRDFLLKGELLRAITDCGFEHPSEVQQ). The Helicase ATP-binding domain maps to 90-265 (IPTAILNVDV…KKFMRNPLEV (176 aa)). 103–110 (AKSGLGKT) is an ATP binding site. Positions 212–215 (DECD) match the DECD box motif. In terms of domain architecture, Helicase C-terminal spans 293–430 (KLNELLDSLE…EYPEEGVDSS (138 aa)).

The protein belongs to the DEAD box helicase family. DECD subfamily.

The protein resides in the nucleus. The catalysed reaction is ATP + H2O = ADP + phosphate + H(+). Functionally, ATP-binding RNA helicase involved in transcription elongation and required for the export of mRNA out of the nucleus. SUB2 also plays a role in pre-mRNA splicing and spliceosome assembly. May be involved in rDNA and telomeric silencing, and maintenance of genome integrity. The sequence is that of ATP-dependent RNA helicase sub2 (sub2) from Emericella nidulans (strain FGSC A4 / ATCC 38163 / CBS 112.46 / NRRL 194 / M139) (Aspergillus nidulans).